Here is a 427-residue protein sequence, read N- to C-terminus: Tumor necrosis factor receptor superfamily member 16 (427 aa).

The N-terminal stretch at 1–31 (MRRAGAACSAMDRLRLLLLLLLLLGVSFGGA) is a signal peptide. Residues 32 to 254 (KETCSTGMYT…VVTRGTADNL (223 aa)) are Extracellular-facing. TNFR-Cys repeat units lie at residues 34-67 (TCST…QTVC), 69-110 (PCLD…DAVC), 111-149 (RCSY…NTVC), and 151-191 (ECPE…DAEC). 12 disulfide bridges follow: Cys35–Cys46, Cys47–Cys60, Cys50–Cys67, Cys70–Cys86, Cys89–Cys102, Cys92–Cys110, Cys112–Cys125, Cys128–Cys141, Cys131–Cys149, Cys152–Cys167, Cys170–Cys183, and Cys173–Cys191. A glycan (N-linked (GlcNAc...) asparagine) is linked at Asn63. The tract at residues 197–223 (RWITRSTPPEGSDVTTPSTQEPEAPPE) is disordered. A compositionally biased stretch (polar residues) spans 200–217 (TRSTPPEGSDVTTPSTQE). Residues 255-275 (IPVYCSILAAVVVGLVAYIAF) form a helical membrane-spanning segment. The Cytoplasmic portion of the chain corresponds to 276–427 (KRWNSCKQNK…CSESTATSPV (152 aa)). 2 stretches are compositionally biased toward polar residues: residues 284–294 (NKQGANSRPVN) and 308–329 (SGIS…TASG). The disordered stretch occupies residues 284 to 334 (NKQGANSRPVNQTPPPEGEKLHSDSGISVDSQSLHDQQTHTQTASGQALKG). Phosphoserine is present on Ser314. The segment at 329 to 344 (GQALKGDGNLYSSLPL) is mediates interaction with KIDINS220. The Death domain occupies 356–421 (GDTWRHLAGE…DIVESLCSES (66 aa)).

As to quaternary structure, homodimer; disulfide-linked. Heterodimer with SORCS2. The extracellular domains of the heterodimer bind NGF. The cytoplasmic region of the heterodimer binds TRIO. NGF binding mediates dissociation of TRIO from the receptor complex. Interacts with TRAF2, TRAF4, TRAF6, PTPN13 and RANBP9. Interacts through TRAF6 with SQSTM1 which bridges NGFR to NTRK1. Interacts with BEX1. Interacts with BEX3. Interacts with KIDINS220 and NTRK1. Can form a ternary complex with NTRK1 and KIDINS220 and this complex is affected by the expression levels of KIDINS220. An increase in KIDINS220 expression leads to a decreased association of NGFR and NTRK1. Interacts (via death domain) with RAB31. Interacts with NTRK2; may regulate the ligand specificity of the NTRK2 receptor. Interacts with LINGO1. Interacts with NRADD. Interacts with MAGED1; the interaction antagonizes the association NGFR:NTRK1. Interacts with RTN4R. Interacts (via death domain) with ARHGDIA and RIPK2. Interacts with BFAR. In terms of assembly, (Microbial infection) Binds to rabies virus glycoprotein Gs. N-glycosylated. O-glycosylated. In terms of processing, phosphorylated on serine residues. Detected in Schwann cells. Detected in embryonic brain, in hippocampus neurons (at protein level). Detected in brain and spinal cord.

The protein resides in the cell membrane. The protein localises to the cytoplasm. It localises to the perikaryon. Its subcellular location is the cell projection. It is found in the growth cone. The protein resides in the dendritic spine. Its function is as follows. Low affinity neurotrophin receptor which can bind to mature NGF, BDNF, NTF3, and NTF4. Forms a heterodimeric receptor with SORCS2 that binds the precursor forms of NGF (proNGF), BDNF (proBDNF) and NTF3 (proNT3) with high affinity, and has much lower affinity for mature NGF and BDNF. Plays an important role in differentiation and survival of specific neuronal populations during development. Can mediate cell survival as well as cell death of neural cells. The heterodimeric receptor formed with SORCS2 plays a role in proBDNF-dependent synaptic plasticity, in hippocampal long term depression (LTD) and long term potentiation (LTP). Plays a role in the inactivation of RHOA. Plays a role in the regulation of the translocation of GLUT4 to the cell surface in adipocytes and skeletal muscle cells in response to insulin, probably by regulating RAB31 activity, and thereby contributes to the regulation of insulin-dependent glucose uptake. Necessary for the circadian oscillation of the clock genes BMAL1, PER1, PER2 and NR1D1 in the suprachiasmatic nucleus (SCN) of the brain and in liver and of the genes involved in glucose and lipid metabolism in the liver. In terms of biological role, (Microbial infection) Cell surface receptor for rabies virus glycoprotein Gs. Does not bind NGF, BDNF, NTF3, and NTF4. The sequence is that of Tumor necrosis factor receptor superfamily member 16 (Ngfr) from Mus musculus (Mouse).